Consider the following 116-residue polypeptide: Protein V2 (116 aa).

This sequence belongs to the geminiviridae protein AV2/V2 family. As to quaternary structure, interacts with host SGS3.

The protein localises to the host cytoplasm. It is found in the host perinuclear region. Functionally, through its interaction with host SGS3, acts as a suppressor of RNA-mediated gene silencing, also known as post-transcriptional gene silencing (PTGS), a mechanism of plant viral defense that limits the accumulation of viral RNAs. The protein is Protein V2 of Tomato yellow leaf curl virus (strain Israel) (TYLCV).